Reading from the N-terminus, the 562-residue chain is Transmembrane E3 ubiquitin-protein ligase FLY1 (562 aa).

The N-terminal stretch at 1-32 (MKKREHLGLGFFEWQIILWLSIWLAISQQALG) is a signal peptide. Residues 33–262 (LRPIREKPRS…TSVNVEVYYN (230 aa)) lie on the Lumenal side of the membrane. A helical transmembrane segment spans residues 263–283 (KAVNYTLMVTFVSFLQVLLLI). Over 284–297 (RQMEHGNTQSGAAK) the chain is Cytoplasmic. The chain crosses the membrane as a helical span at residues 298–318 (VSIVMIGQQAIMDAYLCLLHL). Residues 319–321 (TAG) lie on the Lumenal side of the membrane. Residues 322–342 (ILVESLFNAFATAAFFKFVVF) traverse the membrane as a helical segment. At 343–373 (SIFEMRYLLAIWKATRPSNSGEGWETMRREL) the chain is on the cytoplasmic side. Residues 374 to 394 (SFLYSRFYGILLGGILIMYQF) form a helical membrane-spanning segment. Residues 395-397 (HNY) lie on the Lumenal side of the membrane. Residues 398–418 (MQPILLLMYSFWIPQIVANVV) form a helical membrane-spanning segment. Over 419 to 426 (RDSRKPLH) the chain is Cytoplasmic. The helical transmembrane segment at 427 to 447 (PYYILGMTATRLAIPLYVFGC) threads the bilayer. At 448–458 (PHNFMRVEPNK) the chain is on the lumenal side. The helical transmembrane segment at 459-479 (VWCICLCTFMGLQAVILLLQH) threads the bilayer. The Cytoplasmic segment spans residues 480 to 562 (YFGSRCFVPR…PTCRRSLPPA (83 aa)). The RING-type; atypical zinc finger occupies 512-556 (CVICMTAIDLRQHTSDCMVTPCEHFFHSGCLQRWMDIKMECPTCR).

In terms of tissue distribution, highly expressed in stems. Expressed in root xylem and seed coat.

The protein localises to the endomembrane system. The catalysed reaction is S-ubiquitinyl-[E2 ubiquitin-conjugating enzyme]-L-cysteine + [acceptor protein]-L-lysine = [E2 ubiquitin-conjugating enzyme]-L-cysteine + N(6)-ubiquitinyl-[acceptor protein]-L-lysine.. The protein operates within protein modification; protein ubiquitination. Its function is as follows. E3 ubiquitin-protein ligase that regulates the degree of methylesterification of pectin in seed mucilage. May be involved in the recycling of pectin methylesterase enzymes in the endomembrane system of seed coat epidermal cells. Possesses E3 ubiquitin-protein ligase activity in vitro when associated with the E1 enzyme UBA1 and the E2 enzyme UBC8. May be involved in xylem development. The protein is Transmembrane E3 ubiquitin-protein ligase FLY1 of Arabidopsis thaliana (Mouse-ear cress).